The chain runs to 509 residues: Glycerol kinase (509 aa).

T12 serves as a coordination point for ADP. ATP-binding residues include T12, T13, and S14. A sn-glycerol 3-phosphate-binding site is contributed by T12. Residue R16 coordinates ADP. The sn-glycerol 3-phosphate site is built by R82, E83, Y134, and D245. R82, E83, Y134, D245, and Q246 together coordinate glycerol. 2 residues coordinate ADP: T267 and G311. Positions 267, 311, 315, and 412 each coordinate ATP. Positions 412 and 416 each coordinate ADP.

This sequence belongs to the FGGY kinase family.

It carries out the reaction glycerol + ATP = sn-glycerol 3-phosphate + ADP + H(+). It participates in polyol metabolism; glycerol degradation via glycerol kinase pathway; sn-glycerol 3-phosphate from glycerol: step 1/1. Its activity is regulated as follows. Inhibited by fructose 1,6-bisphosphate (FBP). In terms of biological role, key enzyme in the regulation of glycerol uptake and metabolism. Catalyzes the phosphorylation of glycerol to yield sn-glycerol 3-phosphate. This Rhizorhabdus wittichii (strain DSM 6014 / CCUG 31198 / JCM 15750 / NBRC 105917 / EY 4224 / RW1) (Sphingomonas wittichii) protein is Glycerol kinase.